Reading from the N-terminus, the 138-residue chain is Basic phospholipase A2 ammodytoxin C (138 aa).

An N-terminal signal peptide occupies residues 1 to 16 (MRTLWIVAVCLIGVEG). 7 disulfides stabilise this stretch: C42-C131, C44-C60, C59-C111, C65-C138, C66-C104, C73-C97, and C91-C102. Residues Y43, G45, and G47 each coordinate Ca(2+). H63 is a catalytic residue. A Ca(2+)-binding site is contributed by D64. The active site involves D105.

It belongs to the phospholipase A2 family. Group II subfamily. D49 sub-subfamily. Monomer. Binds to calmodulin, coagulation factor X (F10), 14-3-3 proteins gamma (YWHAG) and epsilon (YWHAE), and R25, a mitochondrial membrane protein. May bind to M-type PLA2 receptor (R-180). Ca(2+) is required as a cofactor. Expressed by the venom gland.

It localises to the secreted. The protein resides in the host cytoplasm. The protein localises to the host cytosol. The enzyme catalyses a 1,2-diacyl-sn-glycero-3-phosphocholine + H2O = a 1-acyl-sn-glycero-3-phosphocholine + a fatty acid + H(+). In terms of biological role, snake venom phospholipase A2 (PLA2) that acts as a presynaptic neurotoxin, an inhibitor of blood coagulation, and has been found to bind with high affinity to intracellular proteins. The response of indirectly stimulated neuromuscular preparations to ammodytoxin (Atx) is triphasic. The first phase, the transient inhibition of the acetylcholine (ACh) release, starts soon after the addition of Atx and lasts for several minutes. This phase is probably independent of Atx enzymatic activity. The effect may be due to the specific binding of the toxin to presynaptic receptors. These receptors, called N-type receptors, are still unidentified. It is noteworthy that a neuronal isoform of the M-type PLA2 receptor (R180) has been identified as a high-affinity receptor for Atx in neuronal plasma membranes. It was demonstrated however that this receptor is not essential for expression of neurotoxicity by Atx. The second phase corresponds to an augmentation of neurotransmitter release. A peak is reached 10-20 minutes after exposure of the preparation to Atx and is followed by a gradual reduction. In this phase, the enzymatic activity of Atx of the mammalian is not significant. It is speculated that the increased release of neurotransmitter in this phase is induced by the interference of Atx with voltage-gated potassium channels. Measurements of ionic showed however that voltage-gated potassium channels are not affected by Atx. The third phase of the response of neuromuscular preparations to Atx, which corresponds to a complete and irreversible paralysis, is clearly dependent on the hydrolytic activity of the toxin. In addition to its presynaptic neurotoxicity, Atx shows an anticoagulant activity by binding with high affinity to activated coagulation factor X (F10) thus inhibiting the formation of the prothrombinase complex (FX/FV) and its activity (IC(50) is 240 nM). Surprisingly, Atx was discovered to bind intracellular proteins such as calmodulin (CaM), 14-3-3 proteins gamma (YWHAG) and epsilon (YWHAE), as well as R25, a mitochondrial integral membrane protein found in cerebral cortex. These findings raised a doubt about the dogma of the exclusively extracellular action of PLA2s, defended by the potential instability of these molecules in the reducing environment of the eukaryotic cytosol coupled with their possible inability to act as enzymes in this cellular compartment, due to too low concentration of calcium ions. This hypothesis was challenged efficiently by demonstrating the internalization of AtxA into a culture cells, but still remains to be directly demonstrated in vivo. PLA2 catalyzes the calcium-dependent hydrolysis of the 2-acyl groups in 3-sn-phosphoglycerides. This chain is Basic phospholipase A2 ammodytoxin C, found in Vipera ammodytes ammodytes (Western sand viper).